The following is a 791-amino-acid chain: von Willebrand factor A domain-containing protein 2 (791 aa).

An N-terminal signal peptide occupies residues 1–23 (MPPLLLLPAIYMLLFFRVSPTIS). The VWFA 1 domain maps to 51–221 (DILFLLDGSH…DATNGLLSTL (171 aa)). Asn146 carries N-linked (GlcNAc...) asparagine glycosylation. The 38-residue stretch at 295–332 (PGPCDSQPCQNGGTCIPEGVDRYHCLCPLAFGGEVNCA) folds into the EGF-like 1 domain. 3 disulfides stabilise this stretch: Cys298–Cys309, Cys303–Cys319, and Cys321–Cys331. VWFA domains follow at residues 342-516 (DVLF…QRRL) and 530-704 (DLVF…IEWL). An EGF-like 2 domain is found at 711 to 747 (PVNLCKPSPCMNEGTCVLKNGSYRCECRGGWEGPHCE). 3 disulfide bridges follow: Cys715-Cys726, Cys720-Cys735, and Cys737-Cys746. The disordered stretch occupies residues 762-791 (HQEPAGLQGPTPSQQAPKHLRIGKALSSAK).

Forms monomers and multimers. As to expression, detected in uterus, kidney, and skin. Also detected in intestine and lung of adult mice, and in calvaria, femur, brain, heart, intestine, skeletal muscle, and lung of newborn mice.

Its subcellular location is the secreted. The chain is von Willebrand factor A domain-containing protein 2 (Vwa2) from Mus musculus (Mouse).